We begin with the raw amino-acid sequence, 500 residues long: UDP-GalNAc:beta-1,3-N-acetylgalactosaminyltransferase 2 (500 aa).

At 1–6 (MRNWLV) the chain is on the cytoplasmic side. Residues 7-23 (LLCPCVLGAALHLWLRL) traverse the membrane as a helical; Signal-anchor for type II membrane protein segment. At 24–500 (RSPPPACASG…CGDPCRCQAR (477 aa)) the chain is on the lumenal side. Asparagine 116 and asparagine 174 each carry an N-linked (GlcNAc...) asparagine glycan.

The protein belongs to the glycosyltransferase 31 family. Post-translationally, N-glycosylated. Expressed in all tissues examined, but at highest levels in testis, adipose tissue, skeletal muscle and ovary.

Its subcellular location is the golgi apparatus membrane. It localises to the endoplasmic reticulum. The enzyme catalyses 3-O-(N-acetyl-beta-D-glucosaminyl-(1-&gt;4)-alpha-D-mannosyl)-L-threonyl-[protein] + UDP-N-acetyl-alpha-D-galactosamine = 3-O-[beta-D-GalNAc-(1-&gt;3)-beta-D-GlcNAc-(1-&gt;4)-alpha-D-Man]-L-Thr-[protein] + UDP + H(+). The protein operates within protein modification; protein glycosylation. Functionally, beta-1,3-N-acetylgalactosaminyltransferase that synthesizes a unique carbohydrate structure, GalNAc-beta-1-3GlcNAc, on N- and O-glycans. Has no galactose nor galactosaminyl transferase activity toward any acceptor substrate. Involved in alpha-dystroglycan (DAG1) glycosylation: acts coordinately with GTDC2/POMGnT2 to synthesize a GalNAc-beta3-GlcNAc-beta-terminus at the 4-position of protein O-mannose in the biosynthesis of the phosphorylated O-mannosyl trisaccharide (N-acetylgalactosamine-beta-3-N-acetylglucosamine-beta-4-(phosphate-6-)mannose), a carbohydrate structure present in alpha-dystroglycan, which is required for binding laminin G-like domain-containing extracellular proteins with high affinity. This is UDP-GalNAc:beta-1,3-N-acetylgalactosaminyltransferase 2 (B3GALNT2) from Homo sapiens (Human).